A 124-amino-acid polypeptide reads, in one-letter code: Small ribosomal subunit protein uS12 (124 aa).

The residue at position 89 (D89) is a 3-methylthioaspartic acid.

The protein belongs to the universal ribosomal protein uS12 family. In terms of assembly, part of the 30S ribosomal subunit. Contacts proteins S8 and S17. May interact with IF1 in the 30S initiation complex.

Its function is as follows. With S4 and S5 plays an important role in translational accuracy. Functionally, interacts with and stabilizes bases of the 16S rRNA that are involved in tRNA selection in the A site and with the mRNA backbone. Located at the interface of the 30S and 50S subunits, it traverses the body of the 30S subunit contacting proteins on the other side and probably holding the rRNA structure together. The combined cluster of proteins S8, S12 and S17 appears to hold together the shoulder and platform of the 30S subunit. The protein is Small ribosomal subunit protein uS12 of Thermoanaerobacter pseudethanolicus (strain ATCC 33223 / 39E) (Clostridium thermohydrosulfuricum).